A 263-amino-acid chain; its full sequence is E3 ubiquitin-protein ligase SINA-like 8 (263 aa).

The RING-type; degenerate zinc-finger motif lies at 35–71 (CPICCEGLTCPIFQCENGHLACSSCCPKLRNKCPACP). An SBD region spans residues 75 to 261 (ILESILVTCP…IKLSIVETSN (187 aa)). The segment at 78–136 (SILVTCPNDMFGCTESFLYGKKSTHEEECIFSLCSCPSLDCEYSGRYEDLYDHYKLTHI) adopts an SIAH-type zinc-finger fold. 8 residues coordinate Zn(2+): C83, C90, H102, C106, C113, C118, H130, and H135.

It belongs to the SINA (Seven in absentia) family.

The enzyme catalyses S-ubiquitinyl-[E2 ubiquitin-conjugating enzyme]-L-cysteine + [acceptor protein]-L-lysine = [E2 ubiquitin-conjugating enzyme]-L-cysteine + N(6)-ubiquitinyl-[acceptor protein]-L-lysine.. The protein operates within protein modification; protein ubiquitination. Functionally, E3 ubiquitin-protein ligase that mediates ubiquitination and subsequent proteasomal degradation of target proteins. E3 ubiquitin ligases accept ubiquitin from an E2 ubiquitin-conjugating enzyme in the form of a thioester and then directly transfers the ubiquitin to targeted substrates. It probably triggers the ubiquitin-mediated degradation of different substrates. The sequence is that of E3 ubiquitin-protein ligase SINA-like 8 from Arabidopsis thaliana (Mouse-ear cress).